An 807-amino-acid polypeptide reads, in one-letter code: cAMP-regulated phosphoprotein 21 (807 aa).

Residues 1–127 (MSEQGGLTPT…KNREKLSERP (127 aa)) form a disordered region. Ser2 bears the N-acetylserine mark. The residue at position 32 (Ser32) is a Phosphoserine. Residues 32-57 (SLDEEEKLELQRRLAAQNQERRKSKS) adopt a coiled-coil conformation. Ser55 carries the post-translational modification Phosphoserine; by PKA. Polar residues predominate over residues 89–98 (IHLQLSSFPS). The span at 101-127 (EEDKSRKDDSEREKEKDKNREKLSERP) shows a compositional bias: basic and acidic residues. Residue Ser133 is modified to Phosphoserine. Positions 163–226 (RMILLKMEQE…SVIINKTSST (64 aa)) constitute an R3H domain. Residues 227–298 (RIPEQRFCEH…VRERIFAHDS (72 aa)) enclose the SUZ domain. The disordered stretch occupies residues 245-282 (SQKRFILKRDNSSIDKEDNQNRMHPFRDDRRSKSIEER). Asn265 and Ser298 each carry phosphoserine. Disordered stretches follow at residues 328 to 434 (LFRA…TSSV), 474 to 536 (GSIL…QPQM), 552 to 576 (SQLSMSRQSSGDTPEPPSGTVYPAS), and 595 to 627 (QLSTGGFSDSGPPISQQVLQAPPSPQGFVQQPP). The segment covering 337–348 (GRTSGSRQSSSE) has biased composition (low complexity). The span at 349 to 358 (TELRWPDHQR) shows a compositional bias: basic and acidic residues. Over residues 359–380 (AWSSTDSDSSNRNLKPTMTKTA) the composition is skewed to polar residues. Phosphoserine occurs at positions 361 and 381. The span at 401–421 (GKLSKTGSESSSSAGSSGSLS) shows a compositional bias: low complexity. The span at 422 to 434 (RTHPQSTALTSSV) shows a compositional bias: polar residues. Residues 514-524 (QQPPQQQPSPQ) show a composition bias toward pro residues. Low complexity predominate over residues 525-535 (PQQQVQASQPQ). Composition is skewed to polar residues over residues 552–563 (SQLSMSRQSSGD) and 595–613 (QLSTGGFSDSGPPISQQVL). Phosphoserine is present on Ser557. Arg650 carries the post-translational modification Asymmetric dimethylarginine.

As to quaternary structure, interacts with CALM1. Post-translationally, phosphorylation of isoform 2 at Ser-55 is enhanced upon dopamine D1 receptor activation and favors interaction with CALM1. In terms of processing, methylated by CARM1 at Arg-650 in immature thymocytes. As to expression, present at high levels in thymus and low levels in brain. In thymus, isoform 1 is specifically found in immature thymocytes (at protein level).

It is found in the cytoplasm. Its function is as follows. May act as a competitive inhibitor of calmodulin-dependent enzymes such as calcineurin in neurons. In Mus musculus (Mouse), this protein is cAMP-regulated phosphoprotein 21 (Arpp21).